Consider the following 525-residue polypeptide: GMP synthase [glutamine-hydrolyzing] (525 aa).

Residues 9-207 (RILILDFGSQ…VRDICQCEAL (199 aa)) enclose the Glutamine amidotransferase type-1 domain. The active-site Nucleophile is the cysteine 86. Residues histidine 181 and glutamate 183 contribute to the active site. One can recognise a GMPS ATP-PPase domain in the interval 208–400 (WTPAKIIDDA…LGLPYDMLYR (193 aa)). Residue 235-241 (SGGVDSS) participates in ATP binding.

Homodimer.

The enzyme catalyses XMP + L-glutamine + ATP + H2O = GMP + L-glutamate + AMP + diphosphate + 2 H(+). Its pathway is purine metabolism; GMP biosynthesis; GMP from XMP (L-Gln route): step 1/1. Its function is as follows. Catalyzes the synthesis of GMP from XMP. This chain is GMP synthase [glutamine-hydrolyzing], found in Salmonella newport (strain SL254).